The primary structure comprises 247 residues: TLC domain-containing protein 1 (247 aa).

Positions 1–27 are cleaved as a signal peptide; sequence MPLLLHPAWPLLLGATLTFRALRRVLC. The Extracellular portion of the chain corresponds to 28 to 46; it reads RLPLPAHVQTDPLRTWRWH. In terms of domain architecture, TLC spans 40–234; it reads LRTWRWHNLL…LLRSDFCPER (195 aa). Residues 47–67 form a helical membrane-spanning segment; that stretch reads NLLVSFTHSIVSGIWALLCIW. The Cytoplasmic segment spans residues 68 to 83; it reads QTPEMLVEIETAWSVC. The helical transmembrane segment at 84-104 threads the bilayer; that stretch reads GYLLVCFSAGYFIHDTVDIVV. Topologically, residues 105 to 123 are extracellular; that stretch reads SRQTRASWEYLVHHVMAMG. The segment at residues 124–144 is an intramembrane region (helical); sequence AFFSGIFWKRFVGGGVLTLLV. Residues 145 to 173 are Extracellular-facing; it reads EVSNIFLTLRMMMKINNAQDILLYKVNKY. Residues 174–194 form a helical membrane-spanning segment; that stretch reads VNLVMYFLFRLAPQAYLTKFF. At 195–201 the chain is on the cytoplasmic side; sequence LQYAGQR. Residues 202–222 form a helical membrane-spanning segment; sequence TLGTFLLSILLMLDVMILIYF. At 223–247 the chain is on the extracellular side; it reads SRLLRSDFCPERAPSRQQKDKFLTE.

Its subcellular location is the cell membrane. Its function is as follows. Regulates the composition and fluidity of the plasma membrane. Inhibits the incorporation of membrane-fluidizing phospholipids containing omega-3 long-chain polyunsaturated fatty acids (LCPUFA) and thereby promotes membrane rigidity. Does not appear to have any effect on LCPUFA synthesis. The sequence is that of TLC domain-containing protein 1 (Tlcd1) from Rattus norvegicus (Rat).